Reading from the N-terminus, the 457-residue chain is GTPase Era, mitochondrial (457 aa).

The transit peptide at 1–18 (MAFRVSISTFGKSLRVRR) directs the protein to the mitochondrion. The region spanning 107–350 (KVLRVAIIGA…RYLVVGAKPG (244 aa)) is the Era-type G domain. Positions 115-122 (GAPNAGKS) are G1. GTP is bound at residue 115 to 122 (GAPNAGKS). The interval 141–145 (HTTRA) is G2. The interval 162-165 (DTPG) is G3. Residues 162-166 (DTPGL) and 231-234 (NKVD) contribute to the GTP site. Residues 231 to 234 (NKVD) form a G4 region. Over residues 270 to 290 (AERRTDREARTSGSGDEEKPG) the composition is skewed to basic and acidic residues. The tract at residues 270-300 (AERRTDREARTSGSGDEEKPGGDVADGEGSE) is disordered. The segment at 328–330 (VSA) is G5. Positions 376–457 (LLEYLPKEVP…KLRLSVKVKN (82 aa)) constitute a KH type-2 domain.

It belongs to the TRAFAC class TrmE-Era-EngA-EngB-Septin-like GTPase superfamily. Era GTPase family.

Its subcellular location is the mitochondrion matrix. It is found in the mitochondrion inner membrane. In terms of biological role, probable GTPase that plays a role in the mitochondrial ribosomal small subunit assembly. Specifically binds the 12S mitochondrial rRNA (12S mt-rRNA) to a 33 nucleotide section delineating the 3' terminal stem-loop region. May act as a chaperone that protects the 12S mt-rRNA on the 28S mitoribosomal subunit during ribosomal small subunit assembly. This is GTPase Era, mitochondrial (eral1) from Salmo salar (Atlantic salmon).